The primary structure comprises 401 residues: MIPGNRMLMVILLSQVLLGGTNYASLIPDTGKKKVAADIQGGGRRSPQSNELLRDFEVTLLQMFGLRKRPQPSKDVVVPAYMRDLYRLQSAEEEDELHDISMEYPETPTSRANTVRSFHHEEHLENLPGTEENGNFRFVFNLSSIPENEVISSAELRLYREQIDHGPAWDEGFHRINIYEVMKPITANGHMINRLLDTRVIHHNVTQWESFDVSPAIMRWTLDKQINHGLAIEVIHLNQTKTYQGKHVRISRSLLPQKDADWSQMRPLLITFSHDGRGHALTRRSKRSPKQQRPRKKNKHCRRHSLYVDFSDVGWNDWIVAPPGYQAFYCHGDCPFPLADHLNSTNHAIVQTLVNSVNSSIPKACCVPTELSAISMLYLDEYDKVVLKNYQEMVVEGCGCR.

Positions 1-19 (MIPGNRMLMVILLSQVLLG) are cleaved as a signal peptide. Positions 20-287 (GTNYASLIPD…GHALTRRSKR (268 aa)) are excised as a propeptide. 3 N-linked (GlcNAc...) asparagine glycosylation sites follow: Asn-141, Asn-204, and Asn-238. The segment at 279-299 (HALTRRSKRSPKQQRPRKKNK) is disordered. Residues 280–299 (ALTRRSKRSPKQQRPRKKNK) show a composition bias toward basic residues. 3 disulfides stabilise this stretch: Cys-301/Cys-366, Cys-330/Cys-398, and Cys-334/Cys-400. N-linked (GlcNAc...) asparagine glycosylation is found at Asn-343 and Asn-358.

Belongs to the TGF-beta family. As to quaternary structure, homodimer; disulfide-linked. Forms heterodimers with the TGF-beta family member derriere. Part of a complex consisting of twsg1 and chrd. Interacts with tsku.

It localises to the secreted. The protein localises to the extracellular space. It is found in the extracellular matrix. Functionally, posterior-ventralizing factor in Xenopus mesoderm induction. Induces posteroventral mesoderm and counteracts dorsalizing signals such as activin. The polypeptide is Bone morphogenetic protein 4 (bmp4) (Xenopus laevis (African clawed frog)).